A 569-amino-acid chain; its full sequence is ABC1 family protein MCP2 (569 aa).

The transit peptide at 1 to 18 (MMTKAFFNKLPFEVFRRY) directs the protein to the mitochondrion. The Mitochondrial matrix portion of the chain corresponds to 19–34 (VRTGKSIPQRSPRTRK). Residues 35–51 (SLLVGGTIASAVVLYNF) traverse the membrane as a helical segment. The Mitochondrial intermembrane segment spans residues 52 to 569 (NDTFHDSVKH…KFIPKTWLSS (518 aa)).

Belongs to the protein kinase superfamily. ADCK protein kinase family.

Its subcellular location is the mitochondrion. It is found in the mitochondrion inner membrane. In terms of biological role, component of MIOREX complexes, large expressome-like assemblies of ribosomes with factors involved in all the steps of post-transcriptional gene expression. Involved in mitochondrial lipid homeostasis. The protein is ABC1 family protein MCP2 of Saccharomyces cerevisiae (strain ATCC 204508 / S288c) (Baker's yeast).